The primary structure comprises 879 residues: Prostaglandin F2 receptor negative regulator (879 aa).

The signal sequence occupies residues 1 to 21 (MGRPAPRPLLLALLSLAVCRG). Ig-like C2-type domains are found at residues 22–137 (RVVR…DTVQ) and 149–263 (PSSR…QEIQ). Topologically, residues 22–832 (RVVRVPAGTL…MDVLNAFKYP (811 aa)) are extracellular. Disulfide bonds link C43/C119 and C169/C247. A glycan (N-linked (GlcNAc...) asparagine) is linked at N44. The Cell attachment site motif lies at 89–91 (RGD). T271 is subject to Phosphothreonine. Ig-like C2-type domains are found at residues 276 to 389 (PTAL…WHKV), 406 to 536 (PEYQ…DVFS), 544 to 662 (ASED…AWSP), and 688 to 813 (PTFN…AEIH). A disulfide bridge connects residues C299 and C373. 3 N-linked (GlcNAc...) asparagine glycosylation sites follow: N300, N383, and N413. The short motif at 424–427 (PTEL) is the Endoplasmic reticulum retention signal element. The cysteines at positions 429 and 515 are disulfide-linked. N-linked (GlcNAc...) asparagine glycosylation is found at N525, N600, N618, and N691. C571 and C655 form a disulfide bridge. Residues 703–705 (RGD) carry the Cell attachment site motif. C711 and C793 are oxidised to a cystine. The helical transmembrane segment at 833 to 853 (LLIGVGLSTVIGLLSCLIGYC) threads the bilayer. Over 854-879 (SSHWCCKKEVRETRRERRRLMSMEMD) the chain is Cytoplasmic.

As to quaternary structure, interacts with CD9 and CD81. Part of a complex composed of CD9, CD81 and IGSF8. Also seems to interact with CD63, CD82 and CD151. Expressed in myoblasts (at protein level).

Its subcellular location is the endoplasmic reticulum membrane. It localises to the golgi apparatus. The protein localises to the trans-Golgi network membrane. Inhibits the binding of prostaglandin F2-alpha (PGF2-alpha) to its specific FP receptor, by decreasing the receptor number rather than the affinity constant. Functional coupling with the prostaglandin F2-alpha receptor seems to occur. In myoblasts, associates with tetraspanins CD9 and CD81 to prevent myotube fusion during muscle regeneration. This Mus musculus (Mouse) protein is Prostaglandin F2 receptor negative regulator (Ptgfrn).